Here is a 376-residue protein sequence, read N- to C-terminus: 23S rRNA (uracil(747)-C(5))-methyltransferase RlmC (376 aa).

Positions 3, 11, 14, and 88 each coordinate [4Fe-4S] cluster. S-adenosyl-L-methionine is bound by residues Gln213, Phe242, Glu263, and Asn308. The active-site Nucleophile is the Cys335.

It belongs to the class I-like SAM-binding methyltransferase superfamily. RNA M5U methyltransferase family. RlmC subfamily.

It carries out the reaction uridine(747) in 23S rRNA + S-adenosyl-L-methionine = 5-methyluridine(747) in 23S rRNA + S-adenosyl-L-homocysteine + H(+). In terms of biological role, catalyzes the formation of 5-methyl-uridine at position 747 (m5U747) in 23S rRNA. The protein is 23S rRNA (uracil(747)-C(5))-methyltransferase RlmC of Vibrio vulnificus (strain YJ016).